The chain runs to 297 residues: Cell division protein ZipA (297 aa).

A topological domain (periplasmic) is located at residue methionine 1. Residues 2–22 (EIGLREWLILIGIIVIAGILF) form a helical membrane-spanning segment. The Cytoplasmic portion of the chain corresponds to 23–297 (DGWRRMRGGK…FERRALTQKR (275 aa)). Positions 48 to 151 (DEEGGSAEVL…AAPASNSVKE (104 aa)) are disordered. The span at 83–92 (ARDREREPKP) shows a compositional bias: basic and acidic residues. Over residues 124 to 133 (LFSDSDDDFA) the composition is skewed to acidic residues.

It belongs to the ZipA family. Interacts with FtsZ via their C-terminal domains.

Its subcellular location is the cell inner membrane. In terms of biological role, essential cell division protein that stabilizes the FtsZ protofilaments by cross-linking them and that serves as a cytoplasmic membrane anchor for the Z ring. Also required for the recruitment to the septal ring of downstream cell division proteins. This chain is Cell division protein ZipA, found in Pseudomonas putida (strain ATCC 47054 / DSM 6125 / CFBP 8728 / NCIMB 11950 / KT2440).